The following is an 83-amino-acid chain: Protein MATERNALLY EXPRESSED GENE 3 (83 aa).

The signal sequence occupies residues 1–22; that stretch reads MQWLAFVAPRWRCVCDQELSAQ. The cysteines at positions 60 and 82 are disulfide-linked.

The protein belongs to the MEG family. As to expression, expressed in endosperm, anther and pollen.

The polypeptide is Protein MATERNALLY EXPRESSED GENE 3 (MEG3) (Zea mays (Maize)).